An 86-amino-acid polypeptide reads, in one-letter code: 4-hydroxyphenylacetate decarboxylase small subunit (86 aa).

Residues His3, Cys6, Cys19, Cys36, Cys45, Cys48, Cys62, and Cys80 each contribute to the [4Fe-4S] cluster site.

Belongs to the HPA decarboxylase small subunit family. Heterooctamer consisting of 4 large (HpdB) subunits and 4 small (HpdC) subunits, arranged as a tetramer of heterodimers. [4Fe-4S] cluster is required as a cofactor.

It catalyses the reaction 4-hydroxyphenylacetate + H(+) = 4-methylphenol + CO2. It carries out the reaction 3,4-dihydroxyphenylacetate + H(+) = 4-methylcatechol + CO2. Component of the HPA decarboxylase that decarboxylates phenylacetates with a hydroxyl group in the p-position. Active toward 4-hydroxyphenylacetate and 3,4-dihydroxyphenylacetate, forming 4-methylphenol and 4-methylcatechol, respectively. Is likely involved in the catabolism of aromatic amino acids such as tyrosine fermentation. 4-methylphenol (p-cresol) formation provides metabolic toxicity, which allows an active suppression of other microbes and may provide growth advantages for the producers in highly competitive environments. The small subunit is essential for enzymatic activity of HPA decarboxylase, and also seems to be involved in the regulation of the enzyme oligomeric state and catalytic activity. In Clostridium scatologenes, this protein is 4-hydroxyphenylacetate decarboxylase small subunit.